A 1357-amino-acid polypeptide reads, in one-letter code: DNA-directed RNA polymerase subunit beta (1357 aa).

The protein belongs to the RNA polymerase beta chain family. In terms of assembly, the RNAP catalytic core consists of 2 alpha, 1 beta, 1 beta' and 1 omega subunit. When a sigma factor is associated with the core the holoenzyme is formed, which can initiate transcription.

It catalyses the reaction RNA(n) + a ribonucleoside 5'-triphosphate = RNA(n+1) + diphosphate. DNA-dependent RNA polymerase catalyzes the transcription of DNA into RNA using the four ribonucleoside triphosphates as substrates. This Pseudomonas aeruginosa (strain ATCC 15692 / DSM 22644 / CIP 104116 / JCM 14847 / LMG 12228 / 1C / PRS 101 / PAO1) protein is DNA-directed RNA polymerase subunit beta.